We begin with the raw amino-acid sequence, 343 residues long: S-adenosylmethionine:tRNA ribosyltransferase-isomerase (343 aa).

The protein belongs to the QueA family. Monomer.

Its subcellular location is the cytoplasm. It carries out the reaction 7-aminomethyl-7-carbaguanosine(34) in tRNA + S-adenosyl-L-methionine = epoxyqueuosine(34) in tRNA + adenine + L-methionine + 2 H(+). It functions in the pathway tRNA modification; tRNA-queuosine biosynthesis. In terms of biological role, transfers and isomerizes the ribose moiety from AdoMet to the 7-aminomethyl group of 7-deazaguanine (preQ1-tRNA) to give epoxyqueuosine (oQ-tRNA). The sequence is that of S-adenosylmethionine:tRNA ribosyltransferase-isomerase from Borreliella burgdorferi (strain ATCC 35210 / DSM 4680 / CIP 102532 / B31) (Borrelia burgdorferi).